Here is a 442-residue protein sequence, read N- to C-terminus: MLDILLLRKDLASAVARLETRKKPQAFLNVEAFQALESERKTIQMRTEELQSQRNQLSKQIGMLMGKGEKDAAEAAKAQVAAIKAELDGSATRLDQIQGELQTMLAAVPNLPHESVPVGSDESANVEVRRWSPDGQQPRSLGFTPKDHVDLGEPLGLDFDMGVKLSGSRFTVMKGGIARLHRALAQFMLDVQTQEHGYTECYVPYVVNADSLKGTGQLPKFEGDLFAAQKGGQDAEPVPDNAQLYLIPTSEVPLTNFVRDEVLAEAQLPLKLTAHTPCFRSEAGSYGRDTRGMIRQHQFDKVEMVQIVHPDKSYEALEEMTRHAEAVLQKLGLPYRVMSLCTGDMGFGAAKTYDLEVWLPAQNTYREISSVSNCEAFQARRLQARFKNAQGKNELVHTLNGSGLAVGRTLVAVLENYQNEDGSVTIPEVLRPYMGGQATLSV.

249 to 251 (TSE) provides a ligand contact to L-serine. 280 to 282 (RSE) lines the ATP pocket. Glu-303 contributes to the L-serine binding site. 367–370 (EISS) lines the ATP pocket. Ser-402 lines the L-serine pocket.

Belongs to the class-II aminoacyl-tRNA synthetase family. Type-1 seryl-tRNA synthetase subfamily. As to quaternary structure, homodimer. The tRNA molecule binds across the dimer.

The protein resides in the cytoplasm. The catalysed reaction is tRNA(Ser) + L-serine + ATP = L-seryl-tRNA(Ser) + AMP + diphosphate + H(+). The enzyme catalyses tRNA(Sec) + L-serine + ATP = L-seryl-tRNA(Sec) + AMP + diphosphate + H(+). It participates in aminoacyl-tRNA biosynthesis; selenocysteinyl-tRNA(Sec) biosynthesis; L-seryl-tRNA(Sec) from L-serine and tRNA(Sec): step 1/1. In terms of biological role, catalyzes the attachment of serine to tRNA(Ser). Is also able to aminoacylate tRNA(Sec) with serine, to form the misacylated tRNA L-seryl-tRNA(Sec), which will be further converted into selenocysteinyl-tRNA(Sec). This is Serine--tRNA ligase from Acidovorax sp. (strain JS42).